Reading from the N-terminus, the 441-residue chain is MERDEEASGPMMEMCTNGGEETSNRRPIISGEPLDIEAYAALYKGRTKIMRLLFIANHCGGNHALQFDALRMAYDEIKKGENTQLFREVVNKIGNRLGEKYGMDLAWCEAVDRRAEQKKVKLENELSSYRTNLIKESIRMGYNDFGDFYYACGMLGDAFKNYIRTRDYCTTTKHIIHMCMNAILVSIEMGQFTHVTSYVNKAEQNPETLEPMVNAKLRCASGLAHLELKKYKLAARKFLDVNPELGNSYNEVIAPQDIATYGGLCALASFDRSELKQKVIDNINFRNFLELVPDVRELINDFYSSRYASCLEYLASLKSNLLLDIHLHDHVDTLYDQIRKKALIQYTLPFVSVDLSRMADAFKTSVSGLEKELEALITDNQIQARIDSHNKILYARHADQRNATFQKVLQMGNEFDRDVRAMLLRANLLKHEYHARSARKL.

Positions 1–28 are disordered; the sequence is MERDEEASGPMMEMCTNGGEETSNRRPI. Residues 230–400 form the PCI domain; sequence KYKLAARKFL…KILYARHADQ (171 aa).

This sequence belongs to the CSN1 family. As to quaternary structure, component of the CSN complex, probably composed of CSN1, CSN2, CSN3, CSN4, CSN5 (CSN5A or CSN5B), CSN6 (CSN6A or CSN6B), CSN7 and CSN8. Interacts with itself and (via PCI domain) with CSN7 (via PCI domain). In the CSN complex, it probably interacts directly with CSN2, CSN3, CSN4 and CSN5B. Interacts with the 26S proteasome subunit RPN6. Interacts (via N-terminal domain) with TSA1 (via C-terminal domain). Binds to the translation initiation factors TIF3C1, TIF3E1 and TIF3H1. As to expression, expressed in leaves, flowers, immature siliques, and light-grown roots.

Its subcellular location is the cytoplasm. It localises to the nucleus. Its function is as follows. Component of the COP9 signalosome complex (CSN), a complex involved in various cellular and developmental processes such as photomorphogenesis and auxin and jasmonate responses. The CSN complex is an essential regulator of the ubiquitin (Ubl) conjugation pathway by mediating the deneddylation of the cullin subunits of SCF-type E3 ligase complexes, leading to decrease the Ubl ligase activity of SCF. It is involved in repression of photomorphogenesis in darkness by regulating the activity of COP1-containing Ubl ligase complexes. The complex is also required for degradation of IAA6 by regulating the activity of the Ubl ligase SCF-TIR complex. In the complex, it plays a central role in CSN assembly. This Arabidopsis thaliana (Mouse-ear cress) protein is COP9 signalosome complex subunit 1 (CSN1).